We begin with the raw amino-acid sequence, 54 residues long: Protein GndA (54 aa).

Residues 28–50 traverse the membrane as a helical segment; the sequence is LFVVIVSFQQRALTSSVPVFLAV.

The protein resides in the cell inner membrane. The chain is Protein GndA from Escherichia coli (strain K12).